A 358-amino-acid chain; its full sequence is Alternative oxidase, mitochondrial (358 aa).

A helical transmembrane segment spans residues 152–172 (LIRYVFLESVAGVPGMVAGML). Residues glutamate 159, glutamate 198, and histidine 201 each contribute to the Fe cation site. Residues 218 to 238 (MILGAQGVFFNSFFLCYLFSP) traverse the membrane as a helical segment. Fe cation contacts are provided by glutamate 249, glutamate 306, and histidine 309.

Belongs to the alternative oxidase family. Requires Fe cation as cofactor.

The protein resides in the mitochondrion inner membrane. Functionally, catalyzes cyanide-resistant oxygen consumption. May increase respiration when the cytochrome respiratory pathway is restricted, or in response to low temperatures. This chain is Alternative oxidase, mitochondrial (AOX1), found in Monilinia fructicola (Brown rot fungus).